The primary structure comprises 602 residues: DNA mismatch repair protein MutL (602 aa).

Positions 337–367 are disordered; that stretch reads KRPFPGSSTNYSGIQQDTKKQESDNPEKARG. The span at 342–352 shows a compositional bias: polar residues; it reads GSSTNYSGIQQ. The span at 353-367 shows a compositional bias: basic and acidic residues; the sequence is DTKKQESDNPEKARG.

This sequence belongs to the DNA mismatch repair MutL/HexB family.

Functionally, this protein is involved in the repair of mismatches in DNA. It is required for dam-dependent methyl-directed DNA mismatch repair. May act as a 'molecular matchmaker', a protein that promotes the formation of a stable complex between two or more DNA-binding proteins in an ATP-dependent manner without itself being part of a final effector complex. This is DNA mismatch repair protein MutL from Kosmotoga olearia (strain ATCC BAA-1733 / DSM 21960 / TBF 19.5.1).